The primary structure comprises 262 residues: Type III pantothenate kinase (262 aa).

6-13 (DVGNTNAV) lines the ATP pocket. Residues Tyr-100 and 107–110 (GADR) each bind substrate. Asp-109 acts as the Proton acceptor in catalysis. Residue Asp-129 coordinates K(+). Thr-132 contributes to the ATP binding site. Residue Thr-184 participates in substrate binding.

This sequence belongs to the type III pantothenate kinase family. In terms of assembly, homodimer. It depends on NH4(+) as a cofactor. K(+) is required as a cofactor.

The protein resides in the cytoplasm. It catalyses the reaction (R)-pantothenate + ATP = (R)-4'-phosphopantothenate + ADP + H(+). Its pathway is cofactor biosynthesis; coenzyme A biosynthesis; CoA from (R)-pantothenate: step 1/5. Its function is as follows. Catalyzes the phosphorylation of pantothenate (Pan), the first step in CoA biosynthesis. The protein is Type III pantothenate kinase of Bacillus anthracis (strain A0248).